Here is a 633-residue protein sequence, read N- to C-terminus: ATP-dependent zinc metalloprotease FtsH (633 aa).

The Cytoplasmic segment spans residues 1-19; the sequence is MTPSNEPGKQDQIPQPGPT. A helical transmembrane segment spans residues 20–40; it reads IPNQYSFLWLSAAIFLMFLWL. At 41-133 the chain is on the periplasmic side; the sequence is QGNNQQQQQE…SRSGRPWWQE (93 aa). Residues 134-154 form a helical membrane-spanning segment; sequence LILGFLPWILLLALMFWFWGA. The Cytoplasmic segment spans residues 155 to 633; it reads AQKRMTQGGG…LEEARSRETA (479 aa). An ATP-binding site is contributed by 226-233; that stretch reads GPPGTGKT. Position 447 (histidine 447) interacts with Zn(2+). Glutamate 448 is an active-site residue. Residues histidine 451 and aspartate 523 each coordinate Zn(2+).

This sequence in the central section; belongs to the AAA ATPase family. In the C-terminal section; belongs to the peptidase M41 family. As to quaternary structure, homohexamer. It depends on Zn(2+) as a cofactor.

It is found in the cell inner membrane. Acts as a processive, ATP-dependent zinc metallopeptidase for both cytoplasmic and membrane proteins. Plays a role in the quality control of integral membrane proteins. In Marinobacter nauticus (strain ATCC 700491 / DSM 11845 / VT8) (Marinobacter aquaeolei), this protein is ATP-dependent zinc metalloprotease FtsH.